Here is a 438-residue protein sequence, read N- to C-terminus: Protein ROOT INITIATION DEFECTIVE 3 (438 aa).

WD repeat units lie at residues 36-74, 76-115, 118-157, 171-212, 214-253, and 261-300; these read AHGL…AEVK, YPVE…LLKK, GHYR…DDFQ, EHTM…LLKN, IFPS…EYGT, and EKGK…HVRT. Residues 394–434 are a coiled coil; that stretch reads AATEMEMERLKLEYKRSLQMNEQWQKNYENLLQVVMEEEQI.

Involved in meristem development. Acts as a negative regulator of the CUC-STM pathway in shoot apical meristem (SAM) neo-formation. This chain is Protein ROOT INITIATION DEFECTIVE 3 (RID3), found in Arabidopsis thaliana (Mouse-ear cress).